The primary structure comprises 288 residues: Male determiner protein Nix (288 aa).

RRM domains lie at Y19 to S94, I108 to R179, and R205 to E282.

Functionally, male determiner protein (M-factor) that controls male somatic sexual differentiation. Acts as a dominant factor that regulates the mRNA splicing of doublesex (dsx) or fruitless (fru) transcripts and promotes expression of male splice forms of dsx and fru. The chain is Male determiner protein Nix from Aedes aegypti (Yellowfever mosquito).